The chain runs to 894 residues: Microsomal triglyceride transfer protein large subunit (894 aa).

The N-terminal stretch at 1-18 (MILLAVLFLCFISSYSAS) is a signal peptide. A Vitellogenin domain is found at 28 to 659 (LNNDRLYKLT…IFQYIGKAGL (632 aa)). The cysteines at positions 174 and 194 are disulfide-linked.

As to quaternary structure, heterodimer; heterodimerizes with the protein disulfide isomerase (P4HB/PDI). Interacts with APOB. Interacts with PRAP1. Liver and small intestine. Also found in ovary, testis and kidney.

It localises to the endoplasmic reticulum. It is found in the golgi apparatus. The catalysed reaction is a 1,2-diacyl-sn-glycero-3-phosphocholine(in) = a 1,2-diacyl-sn-glycero-3-phosphocholine(out). It catalyses the reaction a 1,2-diacyl-sn-glycero-3-phosphoethanolamine(in) = a 1,2-diacyl-sn-glycero-3-phosphoethanolamine(out). It carries out the reaction a cholesterol ester(in) = a cholesterol ester(out). The enzyme catalyses a triacyl-sn-glycerol(in) = a triacyl-sn-glycerol(out). Functionally, catalyzes the transport of triglyceride, cholesteryl ester, and phospholipid between phospholipid surfaces. Required for the assembly and secretion of plasma lipoproteins that contain apolipoprotein B. May be involved in regulating cholesteryl ester biosynthesis in cells that produce lipoproteins. This is Microsomal triglyceride transfer protein large subunit (MTTP) from Homo sapiens (Human).